The following is a 522-amino-acid chain: Protein RCC2 (522 aa).

Positions 1–83 (MPRKKAAAAA…TAGKAGGAAV (83 aa)) are disordered. The residue at position 16 (serine 16) is a Phosphoserine. Threonine 20 is subject to Phosphothreonine. The span at 24–36 (GPRKRGGPAGRKR) shows a compositional bias: basic residues. A phosphoserine mark is found at serine 43, serine 44, serine 45, serine 46, serine 50, and serine 51. Residues 71–82 (RPATAGKAGGAA) show a composition bias toward low complexity. N6-acetyllysine occurs at positions 92 and 124. 7 RCC1 repeats span residues 103–165 (KGQL…SLLI), 168–219 (EGKL…ALTE), 221–271 (GSVF…IMDC), 273–347 (GNLY…VLDS), 348–401 (QKRV…AVSE), 403–447 (GGLF…VAAD), and 448–501 (ESTI…VIAR). Lysine 293 is modified (N6-acetyllysine). Residues 318–325 (KTKDGQIL) form a required for interaction with RAC1 region. A Phosphothreonine modification is found at threonine 342. The residue at position 377 (lysine 377) is an N6-acetyllysine. The span at 502-515 (DESETEKEKIKKLP) shows a compositional bias: basic and acidic residues. The segment at 502–522 (DESETEKEKIKKLPEYNPRTL) is disordered.

Interacts with RAC1. Interacts with nucleotide-free and with GDP and GTP-bound forms of RAC1, with a slight preference for GDP-bound RAC1. Binds preferentially to the nucleotide-free form of RAC1. Interacts with CORO1C. Interacts with microtubules.

It localises to the nucleus. The protein localises to the nucleolus. It is found in the cytoplasm. Its subcellular location is the cytoskeleton. The protein resides in the chromosome. It localises to the centromere. The protein localises to the spindle. It is found in the midbody. Its subcellular location is the cell membrane. In terms of biological role, multifunctional protein that may affect its functions by regulating the activity of small GTPases, such as RAC1 and RALA. Required for normal progress through the cell cycle, both during interphase and during mitosis. Required for the presence of normal levels of MAD2L1, AURKB and BIRC5 on inner centromeres during mitosis, and for normal attachment of kinetochores to mitotic spindles. Required for normal organization of the microtubule cytoskeleton in interphase cells. Functions as guanine nucleotide exchange factor (GEF) for RALA. Interferes with the activation of RAC1 by guanine nucleotide exchange factors. Prevents accumulation of active, GTP-bound RAC1, and suppresses RAC1-mediated reorganization of the actin cytoskeleton and formation of membrane protrusions. Required for normal cellular responses to contacts with the extracellular matrix of adjacent cells, and for directional cell migration in response to a fibronectin gradient (in vitro). In Homo sapiens (Human), this protein is Protein RCC2 (RCC2).